The following is a 260-amino-acid chain: Ubiquinone/menaquinone biosynthesis C-methyltransferase UbiE (260 aa).

Residues T83, D104, 132–133 (NA), and S149 contribute to the S-adenosyl-L-methionine site.

Belongs to the class I-like SAM-binding methyltransferase superfamily. MenG/UbiE family.

The catalysed reaction is a 2-demethylmenaquinol + S-adenosyl-L-methionine = a menaquinol + S-adenosyl-L-homocysteine + H(+). It carries out the reaction a 2-methoxy-6-(all-trans-polyprenyl)benzene-1,4-diol + S-adenosyl-L-methionine = a 5-methoxy-2-methyl-3-(all-trans-polyprenyl)benzene-1,4-diol + S-adenosyl-L-homocysteine + H(+). The protein operates within quinol/quinone metabolism; menaquinone biosynthesis; menaquinol from 1,4-dihydroxy-2-naphthoate: step 2/2. Its pathway is cofactor biosynthesis; ubiquinone biosynthesis. Its function is as follows. Methyltransferase required for the conversion of demethylmenaquinol (DMKH2) to menaquinol (MKH2) and the conversion of 2-polyprenyl-6-methoxy-1,4-benzoquinol (DDMQH2) to 2-polyprenyl-3-methyl-6-methoxy-1,4-benzoquinol (DMQH2). In Vibrio vulnificus (strain CMCP6), this protein is Ubiquinone/menaquinone biosynthesis C-methyltransferase UbiE.